Here is a 116-residue protein sequence, read N- to C-terminus: Nucleoid-associated protein SACE_0254 (116 aa).

The interval 90-116 is disordered; sequence LQQEKMGPVTGALGGGQGLGGLGLPGL. A compositionally biased stretch (gly residues) spans 101-116; it reads ALGGGQGLGGLGLPGL.

This sequence belongs to the YbaB/EbfC family. In terms of assembly, homodimer.

It localises to the cytoplasm. The protein resides in the nucleoid. Functionally, binds to DNA and alters its conformation. May be involved in regulation of gene expression, nucleoid organization and DNA protection. The protein is Nucleoid-associated protein SACE_0254 of Saccharopolyspora erythraea (strain ATCC 11635 / DSM 40517 / JCM 4748 / NBRC 13426 / NCIMB 8594 / NRRL 2338).